The primary structure comprises 165 residues: Shikimate kinase (165 aa).

11–16 (GAGKTT) serves as a coordination point for ATP. A Mg(2+)-binding site is contributed by Thr-15. Residues Asp-33, Arg-57, and Gly-78 each contribute to the substrate site. Residue Arg-116 coordinates ATP. Arg-134 contributes to the substrate binding site.

The protein belongs to the shikimate kinase family. In terms of assembly, monomer. It depends on Mg(2+) as a cofactor.

It localises to the cytoplasm. The catalysed reaction is shikimate + ATP = 3-phosphoshikimate + ADP + H(+). The protein operates within metabolic intermediate biosynthesis; chorismate biosynthesis; chorismate from D-erythrose 4-phosphate and phosphoenolpyruvate: step 5/7. Functionally, catalyzes the specific phosphorylation of the 3-hydroxyl group of shikimic acid using ATP as a cosubstrate. The polypeptide is Shikimate kinase (Bacillus anthracis (strain A0248)).